A 144-amino-acid polypeptide reads, in one-letter code: Transcription antitermination protein NusB (144 aa).

The protein belongs to the NusB family.

Its function is as follows. Involved in transcription antitermination. Required for transcription of ribosomal RNA (rRNA) genes. Binds specifically to the boxA antiterminator sequence of the ribosomal RNA (rrn) operons. The chain is Transcription antitermination protein NusB from Blochmanniella pennsylvanica (strain BPEN).